Consider the following 325-residue polypeptide: uncharacterized protein (325 aa).

A helical membrane pass occupies residues 10 to 30; the sequence is IVFVSLAALVLLVSVSVFIYH. Positions 94-166 constitute an AB hydrolase-1 domain; it reads KIAVVDRAGY…EIKAIIAMDI (73 aa).

Its subcellular location is the cell membrane. This is an uncharacterized protein from Bacillus subtilis (strain 168).